The primary structure comprises 283 residues: MENLESPNYEPALVYEWIIQLVSGTSREQALVELSRKREQYEDLALILWHSYGVMTALLQEIISVYPLLNPPTLTGPTSNRVCNALALLQCIASHPETRIHFLNAHITLFLYPFLNTLSKSKPFEYLRLTSLGVIGALVKNDSPEVINFLLSTEIIPLCLRIMENGSELSKTVAIFIVQKFLCDDVGLQYICQTYERFYAVASVLNNMVMQLVDSFAFRLLKHVIRCYLRLSDNPRAREALRHCLPEPLRDATFAQVLKDDHNTKKCLAQLLINLSDVAVVNQ.

This sequence belongs to the CNOT9 family.

In terms of biological role, a differentiation-controlling factor that is essential for the onset of sexual development. Induces ste11 when sexual development is invoked through nitrogen starvation. This chain is Cell differentiation protein rcd1 (rcd1), found in Schizosaccharomyces pombe (strain 972 / ATCC 24843) (Fission yeast).